The following is a 218-amino-acid chain: Cytidylate kinase (218 aa).

11–19 is an ATP binding site; the sequence is GPGASGKGT.

It belongs to the cytidylate kinase family. Type 1 subfamily.

The protein localises to the cytoplasm. The enzyme catalyses CMP + ATP = CDP + ADP. The catalysed reaction is dCMP + ATP = dCDP + ADP. The polypeptide is Cytidylate kinase (Neisseria meningitidis serogroup A / serotype 4A (strain DSM 15465 / Z2491)).